A 272-amino-acid polypeptide reads, in one-letter code: TLC domain-containing protein 4 C (272 aa).

The next 7 membrane-spanning stretches (helical) occupy residues 16–36 (FSNSLYYRNSIFFSIIFFIIY), 71–91 (VSMIHAFLVLPFCIISAVESF), 103–123 (SLLMVLSISSGYFIWDLIICY), 128–148 (LVGTPMIIHAIMGLSSNIYVA), 155–175 (CFVPIVAILLITEISTIPLNM), 196–216 (FVITFLVSRCIIGLPFDIYLV), and 233–253 (VFITECGIQFFLNSYWSFLLI). A TLC domain is found at 61–261 (KKKLEWDQRV…LIKKLYQTYL (201 aa)).

This sequence belongs to the TLCD4 family.

The protein resides in the membrane. This is TLC domain-containing protein 4 C (tlcd4c) from Dictyostelium discoideum (Social amoeba).